A 463-amino-acid polypeptide reads, in one-letter code: L-seryl-tRNA(Sec) selenium transferase (463 aa).

K295 carries the post-translational modification N6-(pyridoxal phosphate)lysine.

Belongs to the SelA family. As to quaternary structure, homodecamer; pentamer of dimers. Binds only one seryl-tRNA(Sec) per dimer. It depends on pyridoxal 5'-phosphate as a cofactor.

It localises to the cytoplasm. The enzyme catalyses L-seryl-tRNA(Sec) + selenophosphate + H(+) = L-selenocysteinyl-tRNA(Sec) + phosphate. Its pathway is aminoacyl-tRNA biosynthesis; selenocysteinyl-tRNA(Sec) biosynthesis; selenocysteinyl-tRNA(Sec) from L-seryl-tRNA(Sec) (bacterial route): step 1/1. In terms of biological role, converts seryl-tRNA(Sec) to selenocysteinyl-tRNA(Sec) required for selenoprotein biosynthesis. This chain is L-seryl-tRNA(Sec) selenium transferase, found in Shigella boydii serotype 4 (strain Sb227).